The chain runs to 175 residues: Inorganic pyrophosphatase (175 aa).

Positions 30, 44, and 56 each coordinate substrate. Mg(2+) contacts are provided by Asp-66, Asp-71, and Asp-103. Tyr-142 contributes to the substrate binding site.

It belongs to the PPase family. As to quaternary structure, homohexamer. Requires Mg(2+) as cofactor.

It localises to the cytoplasm. The enzyme catalyses diphosphate + H2O = 2 phosphate + H(+). Functionally, catalyzes the hydrolysis of inorganic pyrophosphate (PPi) forming two phosphate ions. This is Inorganic pyrophosphatase from Yersinia pestis.